A 208-amino-acid chain; its full sequence is MPSHCRERLPFALHFFAVAYGASLWILGSHGLAAANPACSARDDLSANMTISWTEIRAGCDAERTAYREQNPVGSSWFANAGNGFTGAPYLLQRVLPDLAPEIWGRNDENFGRFGFFPDPDDKSRPLPLGLGIASTAGRPLDAGGNPLGEIDFAKPGLDVVTLACGPHWTGTDAGWTGGRRGCAEHEDGRAQVAGCLLANGDSLLLHP.

Positions 1–34 (MPSHCRERLPFALHFFAVAYGASLWILGSHGLAA) are cleaved as a signal peptide.

This is an uncharacterized protein from Sinorhizobium fredii (strain NBRC 101917 / NGR234).